Consider the following 471-residue polypeptide: Trigger factor (471 aa).

Positions 171 to 262 constitute a PPIase FKBP-type domain; sequence GDLAIVDYAA…LKEIKFRELP (92 aa). A disordered region spans residues 440–471; it reads PEGSLSQTEEDTPDDDAEEEAIVDVEATSDEE. Acidic residues predominate over residues 447–471; it reads TEEDTPDDDAEEEAIVDVEATSDEE.

The protein belongs to the FKBP-type PPIase family. Tig subfamily.

The protein localises to the cytoplasm. The catalysed reaction is [protein]-peptidylproline (omega=180) = [protein]-peptidylproline (omega=0). In terms of biological role, involved in protein export. Acts as a chaperone by maintaining the newly synthesized protein in an open conformation. Functions as a peptidyl-prolyl cis-trans isomerase. This chain is Trigger factor (tig), found in Synechocystis sp. (strain ATCC 27184 / PCC 6803 / Kazusa).